Here is a 1265-residue protein sequence, read N- to C-terminus: MEEMVSQNTEGDKSIDDHWQTEGAETQPGLHETFPLGVLKARVALLATAIGGPDHTSEQEAAPYKLGDDCLACLKDLKRWFVLVDQKQKRWDVASAAAEFRILEEDLIPILVQWEQKMSQGIKQSKVSGLPLSECIKNKQYHGKIALNAFQLMVWMTWPMTLNEESSKNQVHHYSGLKKHQLAYKKAILQAHGGKVVKAAVRIATEVIKIDRLDRSVQDNSLIRLVLNFLRNILAIEPGEVTVSAKQLSKSRNINTSDMLPPNISVDDICLNSVVSVFKKFKVFPFLLTISSSMGHEFEAEYVCLPLLEVAFYLTKDIDPHLLSLKADNPPQSLQNCGNKVSNGQGVVSGQLGMELIHLLDKERHHKMSQIRSSSTRHSRFGGFFSIQTPNNGRLTISNGHSALDHDLALNNIDKKKKWNKTTRNTAEAVQGIPVGVLNGEFNLTFLSHDNRSCLKWFLANFVDSSFNILLKNLIDYFTADEFNQQILQKLQFLLFYAWFLKFERDRCQKGETDGIFVSEALQDTSHILIIKFLREAHELKKWPLVHAAMLAITELLNYLDVLGEDWEEDVVGIYTKIFSNERLKLFSTIPRTASRHSLHYVKACINMNHAIMTTLERFNKNNKDLIIKGFRKRMITRFIVKEGKTTSGDVNGNKNGQDTTRDADEDAISSDEETNMISARLDFKKVLDAYFNGTVIDTYIFYLKHFTELTEEDIKRVLYFLNHILCSNEESFLFRVDFMIVLKEMLAPGGLSVTGHTRIRINEFSDHFMAKLKRKLEKSPFWYINILFPNLHDRELGYYLRYGQQRPNTQSIHKVVAPTMFKHIEGEENMSEQQLKDLKIGVLVSTLLDDGKNHFVEEINRIFKLVVEGYEKHYQNNERSATLHYPRVDFRSDMFDMKRALLFDSDLRALMTTLGYHVADTEVEPCYIGGIFYFPDLSSALNSLEQYMAIPFHTPNGLPSSSYLLRSIDYKSGVDADAKVGEAMRIDQFSDEMADMALSENANRYFEDLNRMEERLEGKQIPRGTAKKRSAIKPKSRKSQPTGIGGIDDDTPVINKSKRKKQLFLSNEFIMDSDDEEELVASPIFYENEIYLRFILNKYQGNLPSHLFSVFSRFANERGRMAGAVVGDYTDLFNGPVPSIEELKSMENSTTHHGLKEILQLQPRDHLSLSPNNENNSAHSSENLSSDSENDNITNDIPLSDSEYNSSNSSQYANTAKTSIIDPPSSKTSLLKLALTHEADVESEDDFIPRKRARKVRLEDGEEY.

Polar residues predominate over residues 650-659 (DVNGNKNGQD). Disordered stretches follow at residues 650–670 (DVNGNKNGQDTTRDADEDAIS), 1019–1052 (GKQIPRGTAKKRSAIKPKSRKSQPTGIGGIDDDT), and 1167–1226 (HLSL…DPPS). Positions 1026 to 1039 (TAKKRSAIKPKSRK) are enriched in basic residues. Low complexity-rich tracts occupy residues 1171 to 1188 (SPNNENNSAHSSENLSSD) and 1201 to 1211 (SDSEYNSSNSS).

Belongs to the timeless family. As to quaternary structure, component of the fork protection complex (FPC) consisting of TOF1 and CSM3.

It localises to the nucleus. Functionally, forms a fork protection complex (FPC) with CSM3 and which is required for chromosome segregation during meiosis and DNA damage repair. FPC coordinates leading and lagging strand synthesis and moves with the replication fork. FPC stabilizes replication forks in a configuration that is recognized by replication checkpoint sensors. In Eremothecium gossypii (strain ATCC 10895 / CBS 109.51 / FGSC 9923 / NRRL Y-1056) (Yeast), this protein is Topoisomerase 1-associated factor 1 (TOF1).